We begin with the raw amino-acid sequence, 114 residues long: Ig kappa chain V region AH80-5 (114 aa).

Residues 1 to 22 (IVMTQTPSSKSVPVGDTVTINC) are framework-1. Residues 23–35 (QAAQSVYSNNRLS) form a complementarity-determining-1 region. The interval 36-50 (WFQQKPGQPPKGLIY) is framework-2. The interval 51–57 (YASTLAS) is complementarity-determining-2. Residues 58 to 93 (GVQQDPSRFKGSGSGTQFTLTISDVQCBBAATVYYC) form a framework-3 region. The complementarity-determining-3 stretch occupies residues 94 to 103 (QGYKSSDTRA). The interval 104-113 (FGGGTEVVVK) is framework-4.

This Oryctolagus cuniculus (Rabbit) protein is Ig kappa chain V region AH80-5.